Reading from the N-terminus, the 367-residue chain is 3-dehydroquinate synthase (367 aa).

NAD(+)-binding positions include 72–77, 106–110, 130–131, K143, K152, and 170–173; these read DGENYK, GVIGD, TT, and FLST. E185, H248, and H265 together coordinate Zn(2+).

Belongs to the sugar phosphate cyclases superfamily. Dehydroquinate synthase family. The cofactor is Co(2+). It depends on Zn(2+) as a cofactor. NAD(+) is required as a cofactor.

It localises to the cytoplasm. The catalysed reaction is 7-phospho-2-dehydro-3-deoxy-D-arabino-heptonate = 3-dehydroquinate + phosphate. The protein operates within metabolic intermediate biosynthesis; chorismate biosynthesis; chorismate from D-erythrose 4-phosphate and phosphoenolpyruvate: step 2/7. Functionally, catalyzes the conversion of 3-deoxy-D-arabino-heptulosonate 7-phosphate (DAHP) to dehydroquinate (DHQ). This is 3-dehydroquinate synthase from Buchnera aphidicola subsp. Cinara cedri (strain Cc).